The chain runs to 297 residues: Pyridoxal 5'-phosphate synthase subunit PdxS (297 aa).

D-ribose 5-phosphate is bound at residue Asp27. The active-site Schiff-base intermediate with D-ribose 5-phosphate is Lys84. Gly156 contacts D-ribose 5-phosphate. Arg168 contacts D-glyceraldehyde 3-phosphate. D-ribose 5-phosphate-binding positions include Gly217 and 238 to 239 (GS).

Belongs to the PdxS/SNZ family. In terms of assembly, in the presence of PdxT, forms a dodecamer of heterodimers.

The catalysed reaction is aldehydo-D-ribose 5-phosphate + D-glyceraldehyde 3-phosphate + L-glutamine = pyridoxal 5'-phosphate + L-glutamate + phosphate + 3 H2O + H(+). The protein operates within cofactor biosynthesis; pyridoxal 5'-phosphate biosynthesis. Catalyzes the formation of pyridoxal 5'-phosphate from ribose 5-phosphate (RBP), glyceraldehyde 3-phosphate (G3P) and ammonia. The ammonia is provided by the PdxT subunit. Can also use ribulose 5-phosphate and dihydroxyacetone phosphate as substrates, resulting from enzyme-catalyzed isomerization of RBP and G3P, respectively. This chain is Pyridoxal 5'-phosphate synthase subunit PdxS, found in Corynebacterium diphtheriae (strain ATCC 700971 / NCTC 13129 / Biotype gravis).